We begin with the raw amino-acid sequence, 54 residues long: Conotoxin Cal6.17 (54 aa).

Residues M1–T19 form the signal peptide. Cystine bridges form between C24–C39, C32–C49, and C38–C53.

In terms of tissue distribution, expressed by the venom duct.

Its subcellular location is the secreted. Its function is as follows. Probable neurotoxin. The sequence is that of Conotoxin Cal6.17 from Californiconus californicus (California cone).